The chain runs to 144 residues: MNEELQNQFMALDVYNQQVDKLKEELSNIDMMIMELIRSIESMESMKVSKEILLPLGAGAFVKAEAQNPEKIILSVGVDVLLEKDVDEVIVDFQKSVKELEETKELVNTQIQKTNQEIVKLRSELEKRAAAIEQRNAQMRPKTN.

This sequence belongs to the prefoldin alpha subunit family. As to quaternary structure, heterohexamer of two alpha and four beta subunits.

The protein localises to the cytoplasm. Molecular chaperone capable of stabilizing a range of proteins. Seems to fulfill an ATP-independent, HSP70-like function in archaeal de novo protein folding. This chain is Prefoldin subunit alpha, found in Methanococcus maripaludis (strain C7 / ATCC BAA-1331).